We begin with the raw amino-acid sequence, 107 residues long: NADH-quinone oxidoreductase subunit K 2 (107 aa).

A run of 3 helical transmembrane segments spans residues 3–23, 30–50, and 67–87; these read LPIY…LWGA, VRIL…LITF, and ILTL…LAII.

The protein belongs to the complex I subunit 4L family. As to quaternary structure, NDH-1 is composed of 14 different subunits. Subunits NuoA, H, J, K, L, M, N constitute the membrane sector of the complex.

The protein localises to the cell membrane. The catalysed reaction is a quinone + NADH + 5 H(+)(in) = a quinol + NAD(+) + 4 H(+)(out). NDH-1 shuttles electrons from NADH, via FMN and iron-sulfur (Fe-S) centers, to quinones in the respiratory chain. The immediate electron acceptor for the enzyme in this species is believed to be a menaquinone. Couples the redox reaction to proton translocation (for every two electrons transferred, four hydrogen ions are translocated across the cytoplasmic membrane), and thus conserves the redox energy in a proton gradient. This Symbiobacterium thermophilum (strain DSM 24528 / JCM 14929 / IAM 14863 / T) protein is NADH-quinone oxidoreductase subunit K 2.